A 1202-amino-acid polypeptide reads, in one-letter code: DNA-directed RNA polymerase subunit beta (1202 aa).

The protein belongs to the RNA polymerase beta chain family. In terms of assembly, the RNAP catalytic core consists of 2 alpha, 1 beta, 1 beta' and 1 omega subunit. When a sigma factor is associated with the core the holoenzyme is formed, which can initiate transcription.

The enzyme catalyses RNA(n) + a ribonucleoside 5'-triphosphate = RNA(n+1) + diphosphate. In terms of biological role, DNA-dependent RNA polymerase catalyzes the transcription of DNA into RNA using the four ribonucleoside triphosphates as substrates. This is DNA-directed RNA polymerase subunit beta from Mycoplasmopsis synoviae (strain 53) (Mycoplasma synoviae).